The primary structure comprises 119 residues: Large ribosomal subunit protein bL20 (119 aa).

The protein belongs to the bacterial ribosomal protein bL20 family.

In terms of biological role, binds directly to 23S ribosomal RNA and is necessary for the in vitro assembly process of the 50S ribosomal subunit. It is not involved in the protein synthesizing functions of that subunit. In Shewanella woodyi (strain ATCC 51908 / MS32), this protein is Large ribosomal subunit protein bL20.